The following is a 450-amino-acid chain: Protein tweety homolog 1 (450 aa).

At 1–43 (MGAPPGYRPSAWVHLLHQLPRADFQLRPVPSVFAPQEQEYQQA) the chain is on the extracellular side. The helical transmembrane segment at 44–64 (LLLVAALAGLGLGLSLIFIAV) threads the bilayer. Over 65–88 (YLIRFCCCRPPEPPGSKIPSPGGG) the chain is Cytoplasmic. The helical transmembrane segment at 89–109 (CVTWSCIVALLAGCTGIGIGF) threads the bilayer. Residues 110 to 214 (YGNSETSDGV…NVSFVEEYRW (105 aa)) lie on the Extracellular side of the membrane. N130 and N205 each carry an N-linked (GlcNAc...) asparagine glycan. The chain crosses the membrane as a helical span at residues 215–235 (LAYVLLLLLELLVCLFTLLGL). Over 236–240 (AKQSK) the chain is Cytoplasmic. The chain crosses the membrane as a helical span at residues 241–261 (WLVIVMTVMSLLVLVLSWGSM). Residues 262–390 (GLEAATAVGL…LRGLCEDALE (129 aa)) lie on the Extracellular side of the membrane. Disulfide bonds link C275/C385 and C303/C370. N-linked (GlcNAc...) asparagine glycosylation is found at N284 and N355. The helical transmembrane segment at 391–411 (GLLFLLLFSLLSAGALATALC) threads the bilayer. Over 412–450 (SLPRAWALFPPSDDYDDTDDDDPFNPQESKRFVQWQSSI) the chain is Cytoplasmic. The tract at residues 428–450 (DTDDDDPFNPQESKRFVQWQSSI) is disordered. S440 is subject to Phosphoserine.

It belongs to the tweety family. As to quaternary structure, homotetramer; disulfide-linked. Homodimer. In terms of processing, N-glycosylated. Contains high-mannose, hybrid and complex oligosaccharides. In terms of tissue distribution, expressed in brain, eye, ovary and testis, and at lower levels in muscle, placenta, liver and lung.

It is found in the cell membrane. The enzyme catalyses chloride(in) = chloride(out). It carries out the reaction L-glutamate(out) = L-glutamate(in). In terms of biological role, calcium-independent, swelling-dependent volume-regulated anion channel (VRAC-swell) which plays a pivotal role in the process of regulatory volume decrease (RVD) in the brain through the efflux of anions like chloride and organic osmolytes like glutamate. Ca(2+)-independent, swelling-activated chloride channel, possibly involved in regulation of cell volume. The polypeptide is Protein tweety homolog 1 (TTYH1) (Homo sapiens (Human)).